The sequence spans 133 residues: Small ribosomal subunit protein uS8c (133 aa).

Belongs to the universal ribosomal protein uS8 family. Part of the 30S ribosomal subunit.

Its subcellular location is the plastid. The protein resides in the chloroplast. In terms of biological role, one of the primary rRNA binding proteins, it binds directly to 16S rRNA central domain where it helps coordinate assembly of the platform of the 30S subunit. The sequence is that of Small ribosomal subunit protein uS8c (rps8) from Pyropia yezoensis (Susabi-nori).